The following is a 69-amino-acid chain: Disintegrin EMF10A (69 aa).

The Disintegrin domain occupies 1–66 (MNSANPCCDP…DCPRNPWKSE (66 aa)). Cystine bridges form between Cys7-Cys30, Cys21-Cys27, Cys26-Cys51, and Cys39-Cys58. The Cell attachment site motif lies at 43 to 45 (RGD).

This sequence belongs to the disintegrin family. Dimeric disintegrin subfamily. In terms of assembly, heterodimer with EMF10B; disulfide-linked. In terms of tissue distribution, expressed by the venom gland.

The protein localises to the secreted. Functionally, extremely potent and selective inhibitor of integrin alpha-5/beta-1 (ITGA5/ITGB1). Partially inhibits adhesion of cells expressing alpha-IIb/beta-3 (ITGA2B/ITGB3), alpha-V/beta-3 (ITGAV/ITGB3), and alpha-4/beta-1 (ITGA4/ITGB1) to appropriate ligands only at concentration higher than 500 nM. Weakly inhibits ADP-induced platelet aggregation. In Eristicophis macmahoni (Leaf-nosed viper), this protein is Disintegrin EMF10A.